A 691-amino-acid polypeptide reads, in one-letter code: MKRTILSLLAAVSLAIPVYAAGYSDGNPTQQTSQSSMMTPEMLLTMARIGGFSLSPNGKQVVYSVSLPSIQDNKAKTQLFFVNSDGSGRKALTDGTRTAVSPRWIEDGKRIAYLTVIEGEMQLVSILPDGTDQRQVTRIPGGITGYLYSQDGKQLVYTADIKLPNEAKDRNPDLDKISGRVITDLMYKHWDEWVETAPHTFVASLAQQPITQGKDLLEGELFEAPMKPHSDESDIAITPDGKGIAYASRKKTGLEYSISTNSDIYYYDLTTGTTTNLTEGMMGYDTHPSFSPDGKYMTWCSMERDGYESDLIRLFLLDRTTGEKTYLTEGFEYNVEQPTWSQDGKSIYFIACVEAESHLYELTLKNKKIRRITQGQMDYVGFDLQGTTLVAARQSMLAPTDLYRIDLKKGTATAITKENESTLAQLGDIRCEKRWMNTTNGEKMLVWVLYPANFDASKKYPSILYCQGGPQSTISQFWSYRWNPRIMAENGYIVILPNRHGVPGFGKAWNEQISGDYGGQNMRDYLTAADEMKKESYIDPNGMGCVGASYGGFSVYWLAGHHEKRFNCFIAHAGIFNLEAQYLETEEKWFANWDMGGAPWEKSNATAQRTFATSPHLFVDKWDTPILIIHGERDYRILASQGMMAFDAARMHGVPTEMLLYPDENHWVLQPQNAVLWQRTFFRWLDRWLKK.

An N-terminal signal peptide occupies residues 1–20 (MKRTILSLLAAVSLAIPVYA). Catalysis depends on charge relay system residues Ser-549, Asp-634, and His-666.

This sequence belongs to the peptidase S9C family. As to quaternary structure, homodimer.

It localises to the periplasm. Functionally, catalyzes the removal of dipeptides from the N-terminus of oligopeptides. Prefers Ala and hydrophobic residues at the P1 position, and has no preference for P2 residues. Shows the highest dipeptidyl peptidase activity toward the synthetic substrate Lys-Ala-methylcoumaryl-7-amide (Lys-Ala-MCA). Is likely involved in amino acid metabolism and bacterial growth/survival of asaccharolytic P.endodontalis, that utilizes amino acids from extracellular proteinaceous nutrients as energy and carbon sources. This Porphyromonas endodontalis (strain ATCC 35406 / DSM 24491 / JCM 8526 / CCUG 16442 / BCRC 14492 / NCTC 13058 / HG 370) (Bacteroides endodontalis) protein is Dipeptidyl-peptidase 5.